Here is a 235-residue protein sequence, read N- to C-terminus: Phosphoribosylaminoimidazole-succinocarboxamide synthase (235 aa).

It belongs to the SAICAR synthetase family.

It catalyses the reaction 5-amino-1-(5-phospho-D-ribosyl)imidazole-4-carboxylate + L-aspartate + ATP = (2S)-2-[5-amino-1-(5-phospho-beta-D-ribosyl)imidazole-4-carboxamido]succinate + ADP + phosphate + 2 H(+). Its pathway is purine metabolism; IMP biosynthesis via de novo pathway; 5-amino-1-(5-phospho-D-ribosyl)imidazole-4-carboxamide from 5-amino-1-(5-phospho-D-ribosyl)imidazole-4-carboxylate: step 1/2. This is Phosphoribosylaminoimidazole-succinocarboxamide synthase from Streptococcus pneumoniae (strain 70585).